The sequence spans 118 residues: Eukaryotic translation initiation factor 4E-binding protein 1 (118 aa).

Polar residues-rich tracts occupy residues 1-12 (MSGGSSCSQTPS) and 34-48 (YSTT…TTPG). Disordered stretches follow at residues 1–20 (MSGG…ATRR) and 25–48 (DGVQ…TTPG). At Ser2 the chain carries N-acetylserine. Thr37 bears the Phosphothreonine; by MTOR mark. At Thr41 the chain carries Phosphothreonine. Residue Ser44 is modified to Phosphoserine. Position 46 is a phosphothreonine; by MTOR (Thr46). Thr50 carries the post-translational modification Phosphothreonine. Tyr54 carries the phosphotyrosine modification. Residues 54–60 (YDRKFLM) carry the YXXXXLphi motif motif. A Glycyl lysine isopeptide (Lys-Gly) (interchain with G-Cter in ubiquitin) cross-link involves residue Lys57. The tract at residues 64 to 118 (NSPVTKTPPRDLPTIPGVTSPSSDEPPMEASQSHLRNSPEDKRAGGEESQFEMDI) is disordered. Residue Ser65 is modified to Phosphoserine; by DYRK2, MAPK1, MAPK3 and MTOR. A Phosphothreonine; by MTOR modification is found at Thr70. The residue at position 77 (Thr77) is a Phosphothreonine. 2 positions are modified to phosphoserine: Ser83 and Ser96. The segment covering 100 to 109 (NSPEDKRAGG) has biased composition (basic and acidic residues). At Ser101 the chain carries Phosphoserine; by DYRK2. Ser112 is subject to Phosphoserine. The short motif at 114–118 (FEMDI) is the TOS motif element.

It belongs to the eIF4E-binding protein family. Hypophosphorylated EIF4EBP1 competes with EIF4G1/EIF4G3 to interact with EIF4E; insulin stimulated MAP-kinase (MAPK1 and MAPK3) or mTORC1 phosphorylation of EIF4EBP1 causes dissociation of the complex allowing EIF4G1/EIF4G3 to bind and consequent initiation of translation. Interacts (via TOS motif) with RPTOR; promoting phosphorylation by mTORC1. In terms of processing, phosphorylated on serine and threonine residues in response to insulin, EGF and PDGF. Phosphorylation at Thr-37, Thr-46, Ser-65 and Thr-70, corresponding to the hyperphosphorylated form, is regulated by mTORC1 and abolishes binding to EIF4E. Post-translationally, ubiquitinated: when eIF4E levels are low, hypophosphorylated form is ubiquitinated by the BCR(KLHL25) complex, leading to its degradation and serving as a homeostatic mechanism to maintain translation and prevent eIF4E inhibition when eIF4E levels are low. Not ubiquitinated when hyperphosphorylated (at Thr-37, Thr-46, Ser-65 and Thr-70) or associated with eIF4E.

It is found in the cytoplasm. It localises to the nucleus. Its function is as follows. Repressor of translation initiation that regulates EIF4E activity by preventing its assembly into the eIF4F complex: hypophosphorylated form competes with EIF4G1/EIF4G3 and strongly binds to EIF4E, leading to repress translation. In contrast, hyperphosphorylated form dissociates from EIF4E, allowing interaction between EIF4G1/EIF4G3 and EIF4E, leading to initiation of translation. Mediates the regulation of protein translation by hormones, growth factors and other stimuli that signal through the MAP kinase and mTORC1 pathways. The sequence is that of Eukaryotic translation initiation factor 4E-binding protein 1 (EIF4EBP1) from Homo sapiens (Human).